Here is a 44-residue protein sequence, read N- to C-terminus: Photosystem I reaction center subunit IX (44 aa).

The chain crosses the membrane as a helical span at residues 9–29; sequence FIRSAPVVAAVWLSLTAGIII.

The protein belongs to the PsaJ family.

It localises to the cellular thylakoid membrane. May help in the organization of the PsaE and PsaF subunits. The chain is Photosystem I reaction center subunit IX from Prochlorococcus marinus subsp. pastoris (strain CCMP1986 / NIES-2087 / MED4).